The sequence spans 315 residues: MSESLRIIFAGTPDFAARHLDALLSSGHNVVGVFTQPDRPAGRGKKLMPSPVKVLAEEKGLPVFQPVSLRPQESQQLVADLQADVMVVVAYGLILPKAVLEMPRLGCINVHGSLLPRWRGAAPIQRSLWAGDAETGVTIMQMDVGLDTGDMLYKLSCPITAEDTSGTLYDKLAELGPQGLITTLKQLADGTAKPEVQDETLVTYAEKLSKEEARIDWSLSAAQLERCIRAFNPWPMSWLEIEGQPVKVWKASVIDTATNAAPGTILEANKQGIQVATGDGILNLLSLQPAGKKAMSAQDLLNSRREWFVPGNRLA.

Residue 113-116 (SLLP) coordinates (6S)-5,6,7,8-tetrahydrofolate.

This sequence belongs to the Fmt family.

The enzyme catalyses L-methionyl-tRNA(fMet) + (6R)-10-formyltetrahydrofolate = N-formyl-L-methionyl-tRNA(fMet) + (6S)-5,6,7,8-tetrahydrofolate + H(+). Attaches a formyl group to the free amino group of methionyl-tRNA(fMet). The formyl group appears to play a dual role in the initiator identity of N-formylmethionyl-tRNA by promoting its recognition by IF2 and preventing the misappropriation of this tRNA by the elongation apparatus. In Shigella sonnei (strain Ss046), this protein is Methionyl-tRNA formyltransferase.